A 562-amino-acid polypeptide reads, in one-letter code: 2-hydroxyisobutanoyl-CoA mutase large subunit (562 aa).

(3S)-3-hydroxybutanoyl-CoA-binding positions include 76 to 79, 86 to 88, D117, 196 to 198, R235, N240, H245, and R284; these read YPTM, TMR, and TVQ.

This sequence belongs to the acyl-CoA mutase large subunit family. As to quaternary structure, homotetramer composed of two large substrate-binding subunits (HcmA) and two small cobalamin-binding subunits (HcmB).

The catalysed reaction is 2-hydroxyisobutanoyl-CoA = (3S)-3-hydroxybutanoyl-CoA. In terms of biological role, together with HcmB, catalyzes the isomerization of 2-hydroxyisobutyryl-CoA and 3-hydroxybutyryl-CoA. Is specific for 2-hydroxyisobutyryl-CoA and (S)-3-hydroxybutyryl-CoA, and shows only very low activity with (R)-3-hydroxybutyryl-CoA, isobutyryl-CoA and butyryl-CoA. In vitro, can isomerize pivalyl-CoA and isovaleryl-CoA, with much lower efficiency. Plays a central role in the degradation of substrates bearing a tert-butyl moiety, such as the fuel oxygenate methyl tert-butyl ether (MTBE) and its metabolites. The sequence is that of 2-hydroxyisobutanoyl-CoA mutase large subunit from Aquincola tertiaricarbonis.